We begin with the raw amino-acid sequence, 485 residues long: Inosine-5'-monophosphate dehydrogenase (485 aa).

2 consecutive CBS domains span residues 99–154 (IVED…TVKE) and 156–212 (MTRE…KNAV). NAD(+) contacts are provided by residues D247 and 294 to 296 (GIG). Residues G296 and G298 each contribute to the K(+) site. Residue S299 coordinates IMP. C301 lines the K(+) pocket. C301 (thioimidate intermediate) is an active-site residue. IMP-binding positions include 334 to 336 (DGG), 357 to 358 (GN), and 381 to 385 (YRGMG). R397 acts as the Proton acceptor in catalysis. E412 contacts IMP. E466, S467, and H468 together coordinate K(+).

Belongs to the IMPDH/GMPR family. In terms of assembly, homotetramer. K(+) serves as cofactor.

It carries out the reaction IMP + NAD(+) + H2O = XMP + NADH + H(+). It participates in purine metabolism; XMP biosynthesis via de novo pathway; XMP from IMP: step 1/1. Mycophenolic acid (MPA) is a non-competitive inhibitor that prevents formation of the closed enzyme conformation by binding to the same site as the amobile flap. In contrast, mizoribine monophosphate (MZP) is a competitive inhibitor that induces the closed conformation. MPA is a potent inhibitor of mammalian IMPDHs but a poor inhibitor of the bacterial enzymes. MZP is a more potent inhibitor of bacterial IMPDH. Its function is as follows. Catalyzes the conversion of inosine 5'-phosphate (IMP) to xanthosine 5'-phosphate (XMP), the first committed and rate-limiting step in the de novo synthesis of guanine nucleotides, and therefore plays an important role in the regulation of cell growth. This is Inosine-5'-monophosphate dehydrogenase from Pyrococcus furiosus (strain ATCC 43587 / DSM 3638 / JCM 8422 / Vc1).